The primary structure comprises 259 residues: Tegument protein UL51 homolog (259 aa).

A lipid anchor (S-palmitoyl cysteine; by host) is attached at Cys-9.

Belongs to the herpesviridae UL51 family. Oligomerizes. Interacts with ORF53; this interaction mediates ORF53 incorporation to virions. Post-translationally, phosphorylated. In terms of processing, palmitoylation is necessary for Golgi localization.

It is found in the virion tegument. The protein localises to the host cytoplasm. The protein resides in the host Golgi apparatus. In terms of biological role, plays several roles during the time course of infection, including egress of virus particles from the perinuclear space and secondary envelopment of cytoplasmic capsids that bud into specific trans-Golgi network (TGN)-derived membranes. The polypeptide is Tegument protein UL51 homolog (Varicella-zoster virus (strain Dumas) (HHV-3)).